The primary structure comprises 75 residues: Large ribosomal subunit protein bL31 (75 aa).

Belongs to the bacterial ribosomal protein bL31 family. Type A subfamily. As to quaternary structure, part of the 50S ribosomal subunit.

Binds the 23S rRNA. In Nitrobacter winogradskyi (strain ATCC 25391 / DSM 10237 / CIP 104748 / NCIMB 11846 / Nb-255), this protein is Large ribosomal subunit protein bL31.